The following is a 256-amino-acid chain: Probable septum site-determining protein MinC (256 aa).

Positions 105–143 (RRGATAKPEPADEAEPPVAAAAAEAVPEPAPELAPSAPT) are disordered. Residues 120–142 (PPVAAAAAEAVPEPAPELAPSAP) are compositionally biased toward low complexity.

This sequence belongs to the MinC family. As to quaternary structure, interacts with MinD and FtsZ.

Functionally, cell division inhibitor that blocks the formation of polar Z ring septums. Rapidly oscillates between the poles of the cell to destabilize FtsZ filaments that have formed before they mature into polar Z rings. Prevents FtsZ polymerization. The polypeptide is Probable septum site-determining protein MinC (Burkholderia vietnamiensis (strain G4 / LMG 22486) (Burkholderia cepacia (strain R1808))).